A 156-amino-acid chain; its full sequence is Transcription antitermination protein NusB (156 aa).

It belongs to the NusB family.

Functionally, involved in transcription antitermination. Required for transcription of ribosomal RNA (rRNA) genes. Binds specifically to the boxA antiterminator sequence of the ribosomal RNA (rrn) operons. The polypeptide is Transcription antitermination protein NusB (Clostridium kluyveri (strain ATCC 8527 / DSM 555 / NBRC 12016 / NCIMB 10680 / K1)).